The sequence spans 36 residues: Pancreatic polypeptide (36 aa).

Position 36 is a tyrosine amide (Tyr36).

The protein belongs to the NPY family.

The protein localises to the secreted. Its function is as follows. Hormone secreted by pancreatic cells that acts as a regulator of pancreatic and gastrointestinal functions probably by signaling through the G protein-coupled receptor NPY4R2. The protein is Pancreatic polypeptide (PPY) of Erinaceus europaeus (Western European hedgehog).